The sequence spans 610 residues: Mitochondrial import receptor subunit TOM70 (610 aa).

Position 2 is an N-acetylalanine (Ala2). Topologically, residues 2–41 (AASKPVEAAMAAAAAPASGNGVGSSGGTAAPGSGAGTLPR) are mitochondrial intermembrane. Residues 42 to 62 (WHVALAIGAPLLLGAGAMYLW) traverse the membrane as a helical segment. At 63-610 (SRRRRRREAG…KKYGLKPPTL (548 aa)) the chain is on the cytoplasmic side. The segment at 69-109 (REAGGRGDASGLKRNSERKTPEGRASPALGSGPDGSGDSLE) is disordered. Arg74 is modified (omega-N-methylarginine). The segment covering 93–108 (ASPALGSGPDGSGDSL) has biased composition (low complexity). Residues Ser94, Ser99, Ser104, Ser107, and Ser112 each carry the phosphoserine modification. TPR repeat units follow at residues 116–149 (AQAA…CPTE) and 155–188 (STFY…NPKY). Lys187 is modified (N6-acetyllysine). Residue Lys277 forms a Glycyl lysine isopeptide (Lys-Gly) (interchain with G-Cter in SUMO2) linkage. 8 TPR repeats span residues 296–329 (ENSG…QGKY), 331–364 (AEAL…KEAN), 369–402 (ANAL…DPMN), 403–436 (SDVY…RPKF), 444–477 (CFAL…FPRC), 478–511 (AEGY…EPDN), 513–546 (TTYV…DNKC), and 547–580 (DFAY…AKSE).

The protein belongs to the Tom70 family. Forms part of the preprotein translocase complex of the outer mitochondrial membrane (TOM complex) which consists of at least 7 different proteins (TOMM5, TOMM6, TOMM7, TOMM20, TOMM22, TOMM40 and TOMM70). Interacts with CAPN8. Interacts with TRADD, TRAF6 and STING. Interacts with MAVS. Interacts with HSPA8 and HSP90AA1; both interactions are required for preprotein mitochondrial import. The interaction with HSP90AA1 is direct and mediates the association of TOMM70 with IRF3 and TBK1. Upon mitochondrial depolarization, interacts with PINK1; the interaction is required for PINK1-TOM-TIM23 supercomplex formation which is critical for PINK1 stabilization at the outer mitochondrial membrane, kinase activation and downstream mitophagy.

It is found in the mitochondrion outer membrane. Acts as a receptor of the preprotein translocase complex of the outer mitochondrial membrane (TOM complex). Recognizes and mediates the translocation of mitochondrial preproteins from the cytosol into the mitochondria in a chaperone dependent manner. Mediates TBK1 and IRF3 activation induced by MAVS in response to Sendai virus infection and promotes host antiviral responses during virus infection. In Rattus norvegicus (Rat), this protein is Mitochondrial import receptor subunit TOM70.